The following is a 339-amino-acid chain: Ketol-acid reductoisomerase (NADP(+)) (339 aa).

In terms of domain architecture, KARI N-terminal Rossmann spans 1 to 182 (MRVYYDRDAD…GGGRAGIIET (182 aa)). Residues 24 to 27 (YGSQ), Arg48, Ser51, Ser53, and 83 to 86 (DELQ) each bind NADP(+). His108 is an active-site residue. Gly134 contributes to the NADP(+) binding site. The region spanning 183–328 (TFREECETDL…AKLRDMMPWI (146 aa)) is the KARI C-terminal knotted domain. Residues Asp191, Glu195, Glu227, and Glu231 each contribute to the Mg(2+) site. Residue Ser252 participates in substrate binding.

This sequence belongs to the ketol-acid reductoisomerase family. It depends on Mg(2+) as a cofactor.

The catalysed reaction is (2R)-2,3-dihydroxy-3-methylbutanoate + NADP(+) = (2S)-2-acetolactate + NADPH + H(+). The enzyme catalyses (2R,3R)-2,3-dihydroxy-3-methylpentanoate + NADP(+) = (S)-2-ethyl-2-hydroxy-3-oxobutanoate + NADPH + H(+). Its pathway is amino-acid biosynthesis; L-isoleucine biosynthesis; L-isoleucine from 2-oxobutanoate: step 2/4. It functions in the pathway amino-acid biosynthesis; L-valine biosynthesis; L-valine from pyruvate: step 2/4. In terms of biological role, involved in the biosynthesis of branched-chain amino acids (BCAA). Catalyzes an alkyl-migration followed by a ketol-acid reduction of (S)-2-acetolactate (S2AL) to yield (R)-2,3-dihydroxy-isovalerate. In the isomerase reaction, S2AL is rearranged via a Mg-dependent methyl migration to produce 3-hydroxy-3-methyl-2-ketobutyrate (HMKB). In the reductase reaction, this 2-ketoacid undergoes a metal-dependent reduction by NADPH to yield (R)-2,3-dihydroxy-isovalerate. This Rhodopseudomonas palustris (strain BisB18) protein is Ketol-acid reductoisomerase (NADP(+)).